We begin with the raw amino-acid sequence, 3739 residues long: Cardiomyopathy-associated protein 5 (3739 aa).

Disordered regions lie at residues 1–205 (MESG…PPIT), 268–814 (SLEP…SAFV), 835–884 (VSVS…AIQS), 967–1270 (LSED…SDVP), 1288–1313 (TQASLEPEAEDLVPPPTSGWEKRDAK), 1325–1637 (SSAL…NLVS), 1650–1969 (EMNR…EKGK), 1986–2016 (SSIPDSKVSDNEDLETRPGPSVEKAVPAIEP), 2065–2246 (FLSN…WETR), 2273–2318 (AVGE…LALD), 2377–2498 (VYPE…SAVE), 2513–2532 (KKQETWSDRPTVHTFQTSKD), and 2579–2616 (SADGVPPMGGTAQEPEGTSVKDEEFSVTSKPAGLSEDQ). The span at 18–47 (ADEEVAQELETEEESEGEGEETAAESEEEP) shows a compositional bias: acidic residues. Over residues 48-62 (DARLSDEDEEGKTKQ) the composition is skewed to basic and acidic residues. Residues 84-106 (TWETNSSRSSTPWASGESQTSGI) show a composition bias toward polar residues. A compositionally biased stretch (basic residues) spans 130-153 (RTRKRTQKSKRGSPSLRRKGSKKR). Serine 155 bears the Phosphoserine mark. Composition is skewed to polar residues over residues 156-175 (LESQDVLTNQEDGPSISESP) and 325-336 (ADSNLNVPSSTE). Residues 380–406 (ATMVLERAKEELEQNAQGKESSEDDAS) are a coiled coil. 3 stretches are compositionally biased toward basic and acidic residues: residues 479–637 (IVHR…REEE), 644–663 (SIVHREEEHAPEPIVHREEE), and 670–730 (SIVH…ERGV). A run of 2 repeats spans residues 482–493 (REEEHAPEPIVH) and 494–505 (REEEHAPEPIVH). Residues 482 to 720 (REEEHAPEPI…EEHAPEPMVH (239 aa)) are 20 X 12 AA approximate tandem repeats of R-[DE]-[EK]-[EG]-H-[AV]-P-E-[PS]-[IM]-V-[HLR]. The 3; approximate repeat unit spans residues 506 to 519 (REEEHAPEPESIVH). Repeat 4 spans residues 520 to 531 (REEEHAPESIVH). Residues 532–545 (REEEHAPEPVPIVH) form a 5; approximate repeat. The stretch at 546-559 (REEEHAPEPESIVH) is one 6; approximate repeat. 4 repeat units span residues 560-571 (REEEHAPEPIVH), 572-583 (RDKGHALEPIVH), 584-595 (REEEHAPEPIVH), and 596-607 (RDEGHAPEPIVH). An 11; approximate repeat occupies 608–621 (REEEHVPEPESIVR). The 12; approximate repeat unit spans residues 622–633 (KGEEHAPEPIVH). Residues 634–647 (REEEQVPEPESIVH) form a 14; approximate repeat. The stretch at 648–659 (REEEHAPEPIVH) is repeat 15. A 16; approximate repeat occupies 660-673 (REEEQVPEPESIVH). 4 consecutive repeat copies span residues 674-685 (REEEHAPEPMVL), 686-696 (REEHAPEPIVR), 697-708 (REEEHAPEPIVH), and 709-720 (REEEHAPEPMVH). A compositionally biased stretch (acidic residues) spans 740-756 (TEPEDSSLEEEIIELDY). A Phosphoserine modification is found at serine 850. 2 stretches are compositionally biased toward polar residues: residues 861–884 (PAMTSVSEQSLSPSTTEKTSAIQS) and 1151–1161 (CLTSPSEQTVL). Basic and acidic residues-rich tracts occupy residues 1188 to 1197 (AETEQNKVEP) and 1230 to 1242 (EHSEPSQEREESS). Residues 1337-1351 (TSVLPTSQPSVSPES) are compositionally biased toward polar residues. Composition is skewed to basic and acidic residues over residues 1441-1460 (LEQRMLSKNEPEVAKPHSPP) and 1476-1486 (TEVKQESKITR). Residues 1522-1540 (ASSSATTVPVTKLDSNSTK) are compositionally biased toward polar residues. Composition is skewed to basic and acidic residues over residues 1620 to 1631 (NDKHEEITRSPD), 1697 to 1706 (IDSRDRDRSL), 1726 to 1742 (GPAELQRRGKEQEENRK), 1760 to 1770 (IEQKEPKRTLH), 1786 to 1803 (DKPELGVKQLAEKKENLE), and 1836 to 1850 (EKPDGLVNQHEDRKP). A compositionally biased stretch (polar residues) spans 1854-1863 (QLESSESTDL). Basic and acidic residues-rich tracts occupy residues 1874-1885 (DTDHTSETRNQE), 1896-1916 (LSQEPRRVQSKAVDDSEEGRK), 1992-2001 (KVSDNEDLET), and 2153-2165 (ARKEEPSSDHKET). Positions 2181–2190 (KSAQSAFTRM) are enriched in polar residues. At serine 2192 the chain carries Phosphoserine. 5 stretches are compositionally biased toward basic and acidic residues: residues 2212–2244 (GEDRLRQEMPKPTSLEHCEEEVERPTEEKDGWE), 2279–2299 (RMPESRPFKLEESKAAERLEQ), 2306–2318 (KLMEKPSKTLALD), 2377–2419 (VYPE…ETDG), and 2429–2448 (ELEKSGESRVDLKEERRRFV). Position 2411 is a phosphoserine (serine 2411). The residue at position 2495 (serine 2495) is a Phosphoserine. A compositionally biased stretch (basic and acidic residues) spans 2513-2523 (KKQETWSDRPT). Positions 2640–2664 (SVDQEESEQMQDKLQYLEEKASFKS) form a coiled coil. 6 disordered regions span residues 2667 to 2725 (VHDE…QPTV), 2742 to 2773 (LSPGSGKQKSTVEESSEEATKTLTSFPESSAE), 2791 to 2835 (GPEK…GMPL), 2881 to 2959 (EKNE…EREI), 3027 to 3047 (LESEPSSQGNEAGNASPDVNL), and 3111 to 3174 (PEEP…QKEP). Residues 2682–2709 (SKLEVPDRKITSLKENKTKETHKTKEEI) show a composition bias toward basic and acidic residues. Positions 2731 to 3041 (YFEKYTLIDY…SSQGNEAGNA (311 aa)) are required for RYR2 clustering. Residues 2762–2773 (KTLTSFPESSAE) show a composition bias toward polar residues. Composition is skewed to basic and acidic residues over residues 2791 to 2804 (GPEKDDSKLSHAEM) and 2812 to 2828 (KPDDRNAPKGISRDVDS). Position 2905 is a phosphoserine (serine 2905). Basic and acidic residues predominate over residues 2918 to 2929 (YILKDDILHDES). Residues 3030–3047 (EPSSQGNEAGNASPDVNL) show a composition bias toward polar residues. Positions 3153-3162 (VWDRTEDQSA) are enriched in basic and acidic residues. Residues 3187–3214 (KSLVSEMDKALDIHKDHEVSALDTAISA) form an amphipathic helix H1 region. The B-box coiled-coil; BBC stretch occupies residues 3215 to 3342 (VKVQLGEFLE…ERLLSAMEST (128 aa)). Residues 3244–3323 (FNTIEEKCSK…REAEELDETV (80 aa)) adopt a coiled-coil conformation. Positions 3301–3318 (SMDTAKDTLETIVREAEE) are amphipathic helix H2. Fibronectin type-III domains are found at residues 3374-3475 (VPQP…TAPS) and 3476-3568 (TPVI…TRGT). The interval 3421 to 3437 (EINELVEEYRLTVKESC) is amphipathic helix H3. The B30.2/SPRY domain maps to 3550 to 3735 (NASGTSEQSE…LHLGLEPPDS (186 aa)).

Interacts with PRKAR2A. Interacts with ACTN2, DES and DTNBP1/dysbindin. Interacts with DMD/dystrophin. Interacts with the calcineurin catalytic subunit PPP3CA. Interacts with TTN. Interacts with CAPN3; this interaction, which results in CMYA5 proteolysis, may protect CAPN3 from autolysis. Interacts with FSD2. In cardiac muscles, identified in a complex composed of FSD2, CMYA5 and RYR2. Phosphorylated by PKA. In terms of tissue distribution, expressed in skin as well as in cardiac muscle. Expressed in skeletal muscle (at protein level).

It localises to the nucleus. The protein resides in the cytoplasm. Its subcellular location is the perinuclear region. It is found in the myofibril. The protein localises to the sarcomere. It localises to the m line. The protein resides in the sarcoplasmic reticulum. In terms of biological role, may serve as an anchoring protein that mediates the subcellular compartmentation of protein kinase A (PKA) via binding to PRKAR2A. May attenuate calcineurin ability to induce slow-fiber gene program in muscle and may negatively modulate skeletal muscle regeneration. Plays a role in the assembly of ryanodine receptor (RYR2) clusters in striated muscle. The polypeptide is Cardiomyopathy-associated protein 5 (Cmya5) (Mus musculus (Mouse)).